We begin with the raw amino-acid sequence, 254 residues long: uncharacterized protein (254 aa).

The N-terminal stretch at 1–22 (MKRLKKIVLCISFLFLTIFIGG) is a signal peptide. The N-palmitoyl cysteine moiety is linked to residue Cys23. A lipid anchor (S-diacylglycerol cysteine) is attached at Cys23.

This sequence belongs to the staphylococcal tandem lipoprotein family.

The protein localises to the cell membrane. This is an uncharacterized protein from Staphylococcus aureus (strain MSSA476).